Reading from the N-terminus, the 60-residue chain is Large ribosomal subunit protein uL30 (60 aa).

Belongs to the universal ribosomal protein uL30 family. In terms of assembly, part of the 50S ribosomal subunit.

This chain is Large ribosomal subunit protein uL30, found in Cutibacterium acnes (strain DSM 16379 / KPA171202) (Propionibacterium acnes).